We begin with the raw amino-acid sequence, 443 residues long: Mimosinase, chloroplastic (443 aa).

The transit peptide at methionine 1 to lysine 43 directs the protein to the chloroplast. Tyrosine 105, arginine 107, glycine 135, methionine 136, serine 254, and threonine 256 together coordinate pyridoxal 5'-phosphate. Lysine 257 carries the post-translational modification N6-(pyridoxal phosphate)lysine.

The protein belongs to the trans-sulfuration enzymes family. In terms of assembly, forms homodimers. May form homotetramers from two homodimers. Requires pyridoxal 5'-phosphate as cofactor.

It is found in the plastid. The protein localises to the chloroplast. It catalyses the reaction L-mimosine + H2O = 3-hydroxy-4H-pyrid-4-one + pyruvate + NH4(+). Functionally, catalyzes the degradation of mimosine, which is a toxic secondary metabolite found in all Leucaena and Mimosa species. This is Mimosinase, chloroplastic from Leucaena leucocephala (White popinac).